The primary structure comprises 2322 residues: Genome polyprotein (2322 aa).

The 154-residue stretch at 29–182 (MEFTLYNGEK…NPADVLVFVP (154 aa)) folds into the Peptidase C28 domain. Catalysis depends on for leader protease activity residues C51, H148, and D163. Disordered regions lie at residues 199–219 (RLRGAGQSSPTTGSQNQSGNT) and 238–262 (QLGDNAISGGSNEGSTDTTSTHTNN). G202 is lipidated: N-myristoyl glycine; by host. Composition is skewed to polar residues over residues 204–219 (GQSSPTTGSQNQSGNT) and 238–251 (QLGDNAISGGSNEG). A compositionally biased stretch (low complexity) spans 252-262 (STDTTSTHTNN). Positions 869–871 (RGD) match the Cell attachment site motif. The SF3 helicase domain maps to 1189–1353 (NVHIANLCKV…DGYKINNKLD (165 aa)). 1217–1224 (GKSGQGKS) is a binding site for ATP. Residues 1484–1504 (FEVVALCLTLLANIVIMLRQA) lie within the membrane without spanning it. Positions 1512-1574 (DDPLDGDVTL…PRAEGPYAGP (63 aa)) are disordered. Residues 1539 to 1553 (FRERSPTEQGTREDA) are compositionally biased toward basic and acidic residues. 3 positions are modified to O-(5'-phospho-RNA)-tyrosine: Y1571, Y1594, and Y1618. A Peptidase C3 domain is found at 1642–1838 (APPTDLQKMV…YCSCVSRSML (197 aa)). H1685 functions as the For protease 3C activity; Proton donor/acceptor in the catalytic mechanism. Catalysis depends on for protease 3C activity residues D1723 and C1802. Positions 1868–1876 (MRKTKLAPT) match the Nuclear localization signal motif. In terms of domain architecture, RdRp catalytic spans 2086 to 2204 (KNVWDVDYSA…ASDYDLDFEA (119 aa)).

This sequence belongs to the picornaviruses polyprotein family. As to quaternary structure, interacts with host ISG15. Interacts (via R-G-D motif) with host ITGAV/ITGB6. Interacts with host MAVS; this interaction inhibits binding of host TRAF3 to MAVS, thereby suppressing interferon-mediated responses. In terms of assembly, forms homooligomers. As to quaternary structure, homohexamer. Interacts with host VIM. Interacts with host BECN1. Interacts with host DCTN3. In terms of assembly, interacts with RNA-dependent RNA polymerase; this interaction allows 3B-1 to binds 2 polymerases and act as a primer. It also allows the recruitment of the RNA-dependent RNA polymerase to host membranes. As to quaternary structure, interacts with RNA-dependent RNA polymerase; this interaction allows 3B-2 to act as a primer. Interacts with RNA-dependent RNA polymerase; this interaction allows 3B-3 to act as a primer. In terms of assembly, interacts with 3B-1; this interaction allows 3B-1 to binds 2 polymerases and act as a primer. It also allows the recruitment of the RNA-dependent RNA polymerase to host membranes. Interacts with 3B-2; this interaction allows 3B-2 to act as a primer. Interacts with 3B-3; this interaction allows 3B-3 to act as a primer. In terms of processing, removes six residues from its own C-terminus, generating sLb(pro). Post-translationally, specific enzymatic cleavages in vivo by the viral proteases yield a variety of precursors and mature proteins. The polyprotein seems to be cotranslationally cleaved at the 2A/2B junction by a ribosomal skip from one codon to the next without formation of a peptide bond. This process would release the L-P1-2A peptide from the translational complex. During virion maturation, immature virions are rendered infectious following cleavage of VP0 into VP4 and VP2. This maturation seems to be an autocatalytic event triggered by the presence of RNA in the capsid and is followed by a conformational change of the particle. In terms of processing, myristoylation is required during RNA encapsidation and formation of the mature virus particle. Post-translationally, uridylylated by the polymerase and covalently linked to the 5'-end of genomic RNA. These uridylylated forms act as a nucleotide-peptide primer for the polymerase.

It localises to the host nucleus. The protein resides in the host cytoplasm. The protein localises to the virion. Its subcellular location is the host endoplasmic reticulum membrane. It is found in the host cytoplasmic vesicle membrane. It carries out the reaction Autocatalytically cleaves itself from the polyprotein of the foot-and-mouth disease virus by hydrolysis of a Lys-|-Gly bond, but then cleaves host cell initiation factor eIF-4G at bonds -Gly-|-Arg- and -Lys-|-Arg-.. It catalyses the reaction a ribonucleoside 5'-triphosphate + H2O = a ribonucleoside 5'-diphosphate + phosphate + H(+). The enzyme catalyses RNA(n) + a ribonucleoside 5'-triphosphate = RNA(n+1) + diphosphate. The catalysed reaction is Selective cleavage of Gln-|-Gly bond in the poliovirus polyprotein. In other picornavirus reactions Glu may be substituted for Gln, and Ser or Thr for Gly.. Functionally, autocatalytically cleaves itself from the polyprotein at the L/VP0 junction. Also cleaves the host translation initiation factors EIF4G1 and EIF4G3, in order to shut off the capped cellular mRNA transcription. Plays a role in counteracting host innate antiviral response using diverse mechanisms. Possesses a deubiquitinase activity acting on both 'Lys-48' and 'Lys-63'-linked polyubiquitin chains. In turn, inhibits the ubiquitination and subsequent activation of key signaling molecules of type I IFN response such as host RIGI, TBK1, TRAF3 and TRAF6. Inhibits host NF-kappa-B activity by inducing a decrease in RELA mRNA levels. Cleaves a peptide bond in the C-terminus of host ISG15, resulting in the damaging of this modifier that can no longer be attached to target proteins. Also cleaves host G3BP1 and G3BP2 in order to inhibit cytoplasmic stress granules assembly. Lies on the inner surface of the capsid shell. After binding to the host receptor, the capsid undergoes conformational changes. Capsid protein VP4 is released, capsid protein VP1 N-terminus is externalized, and together, they shape a pore in the host membrane through which the viral genome is translocated into the host cell cytoplasm. After genome has been released, the channel shrinks. Its function is as follows. Forms an icosahedral capsid of pseudo T=3 symmetry with capsid proteins VP1 and VP3. The capsid is composed of 60 copies of each capsid protein organized in the form of twelve pentamers and encloses the viral positive strand RNA genome. Upon acidifcation in the endosome, dissociates into pentamers. In terms of biological role, forms an icosahedral capsid of pseudo T=3 symmetry with capsid proteins VP0 and VP3. The capsid is composed of 60 copies of each capsid protein organized in the form of twelve pentamers and encloses the viral positive strand RNA genome. Upon acidifcation in the endosome, dissociates into pentamers. Functionally, forms an icosahedral capsid of pseudo T=3 symmetry with capsid proteins VP2 and VP3. The capsid is composed of 60 copies of each capsid protein organized in the form of twelve pentamers and encloses the viral positive strand RNA genome. Mediates cell entry by attachment to an integrin receptor, usually host ITGAV/ITGB6. In addition, targets host MAVS to suppress type I IFN pathway. Upon acidifcation in the endosome, dissociates into pentamers. Mediates self-processing of the polyprotein by a translational effect termed 'ribosome skipping'. Mechanistically, 2A-mediated cleavage occurs between the C-terminal glycine and the proline of the downstream protein 2B. In the case of foot-and-mouth disease virus, the 2A oligopeptide is post-translationally 'trimmed' from the C-terminus of the upstream protein 1D by 3C proteinase. Its function is as follows. Plays an essential role in the virus replication cycle by acting as a viroporin. Creates a pore in the host endoplasmic reticulum and as a consequence releases Ca2+ in the cytoplasm of infected cell. In turn, high levels of cytoplasmic calcium may trigger membrane trafficking and transport of viral ER-associated proteins to viroplasms, sites of viral genome replication. In terms of biological role, associates with and induces structural rearrangements of intracellular membranes. Triggers host autophagy by interacting with host BECN1 and thereby promotes viral replication. Participates in viral replication and interacts with host DHX9. Displays RNA-binding, nucleotide binding and NTPase activities. May play a role in virion morphogenesis and viral RNA encapsidation by interacting with the capsid protein VP3. Functionally, plays important roles in virus replication, virulence and host range. Cooperates with host DDX56 to inhibit IRF3 nuclear translocation and subsequent type I interferon production. Covalently linked to the 5'-end of both the positive-strand and negative-strand genomic RNAs. Acts as a genome-linked replication primer. Its function is as follows. Cysteine protease that generates mature viral proteins from the precursor polyprotein. In addition to its proteolytic activity, binds to viral RNA and thus influences viral genome replication. RNA and substrate bind cooperatively to the protease. In terms of biological role, RNA-directed RNA polymerase 3D-POL replicates genomic and antigenomic RNA by recognizing replications specific signals. Covalently attaches UMP to a tyrosine of VPg, which is used to prime RNA synthesis. The positive stranded RNA genome is first replicated at virus induced membranous vesicles, creating a dsRNA genomic replication form. This dsRNA is then used as template to synthesize positive stranded RNA genomes. ss(+)RNA genomes are either translated, replicated or encapsidated. The chain is Genome polyprotein from Foot-and-mouth disease virus (isolate Swine/Taiwan/OTai/1997 serotype O) (FMDV).